Reading from the N-terminus, the 204-residue chain is Methylthioribulose-1-phosphate dehydratase (204 aa).

The Zn(2+) site is built by His-94 and His-96.

It belongs to the aldolase class II family. MtnB subfamily. Zn(2+) is required as a cofactor.

The enzyme catalyses 5-(methylsulfanyl)-D-ribulose 1-phosphate = 5-methylsulfanyl-2,3-dioxopentyl phosphate + H2O. The protein operates within amino-acid biosynthesis; L-methionine biosynthesis via salvage pathway; L-methionine from S-methyl-5-thio-alpha-D-ribose 1-phosphate: step 2/6. Its function is as follows. Catalyzes the dehydration of methylthioribulose-1-phosphate (MTRu-1-P) into 2,3-diketo-5-methylthiopentyl-1-phosphate (DK-MTP-1-P). In Serratia proteamaculans (strain 568), this protein is Methylthioribulose-1-phosphate dehydratase.